Reading from the N-terminus, the 203-residue chain is Small ribosomal subunit protein uS4 (203 aa).

In terms of domain architecture, S4 RNA-binding spans 93-173; the sequence is RRLDNVVFRS…FPSWIQVDKA (81 aa).

It belongs to the universal ribosomal protein uS4 family. As to quaternary structure, part of the 30S ribosomal subunit. Contacts protein S5. The interaction surface between S4 and S5 is involved in control of translational fidelity.

Functionally, one of the primary rRNA binding proteins, it binds directly to 16S rRNA where it nucleates assembly of the body of the 30S subunit. In terms of biological role, with S5 and S12 plays an important role in translational accuracy. The chain is Small ribosomal subunit protein uS4 from Chlorobium limicola (strain DSM 245 / NBRC 103803 / 6330).